The sequence spans 715 residues: uncharacterized protein (715 aa).

The helical transmembrane segment at 688 to 708 (VWKFNPALYSTITNIFLLIIF) threads the bilayer.

Belongs to the plectrovirus ORF1 family.

Its subcellular location is the host membrane. This is an uncharacterized protein from Spiroplasma virus SpV1-R8A2 B (SpV1).